The following is a 258-amino-acid chain: Isoprenyl transferase (258 aa).

D38 is a catalytic residue. Position 38 (D38) interacts with Mg(2+). Substrate contacts are provided by residues 39–42, W43, R51, H55, and 83–85; these read GNGR and STE. Catalysis depends on N86, which acts as the Proton acceptor. Substrate contacts are provided by residues W87, R89, R206, and 212–214; that span reads RIS. E225 is a Mg(2+) binding site.

This sequence belongs to the UPP synthase family. As to quaternary structure, homodimer. The cofactor is Mg(2+).

Its function is as follows. Catalyzes the condensation of isopentenyl diphosphate (IPP) with allylic pyrophosphates generating different type of terpenoids. The chain is Isoprenyl transferase from Bacillus cereus (strain ATCC 10987 / NRS 248).